Consider the following 722-residue polypeptide: ORC ubiquitin ligase 1 (722 aa).

The RING-type; degenerate zinc-finger motif lies at 18 to 56; that stretch reads CHICLGKVRQPVVCTNNHVFCSICIDLWLKNNSQCPACR. Coiled coils occupy residues 87-129 and 157-267; these read LRKT…TILD and VVEW…KEDV. Phosphoserine is present on Ser-210. The tract at residues 273–359 is disordered; that stretch reads RAPSADSKGP…RLGARETPMD (87 aa). Residues 302–319 show a composition bias toward low complexity; the sequence is AGSASASHLASPSSSRLA. A compositionally biased stretch (polar residues) spans 323–338; the sequence is SVRQESTSRTEPNCPQ. Residues 339-359 show a composition bias toward basic and acidic residues; that stretch reads NKDRYPKPTEPRLGARETPMD. Ser-522, Ser-549, Ser-557, Ser-564, and Ser-566 each carry phosphoserine. A compositionally biased stretch (polar residues) spans 541-555; sequence MSESDNSKSPCNNGF. Disordered stretches follow at residues 541–585 and 691–722; these read MSES…GSKL and VPEK…ATKS. Basic and acidic residues predominate over residues 571 to 581; the sequence is EFLEEPDKLQE. The span at 698 to 722 shows a compositional bias: polar residues; it reads NGNQSTKRKIQSSLANASPSKATKS. Phosphoserine is present on residues Ser-715 and Ser-717.

Associates with ORC complex. Binds to chromatin; association is cell cycle-regulated, absent from mitotic chromosomes, is associated with chromatin from G1 and partially released from chromatin from mid S-phase. In terms of processing, auto-ubiquitinated.

It localises to the chromosome. The catalysed reaction is S-ubiquitinyl-[E2 ubiquitin-conjugating enzyme]-L-cysteine + [acceptor protein]-L-lysine = [E2 ubiquitin-conjugating enzyme]-L-cysteine + N(6)-ubiquitinyl-[acceptor protein]-L-lysine.. Functionally, E3 ubiquitin ligase essential for DNA replication origin activation during S phase. Acts as a replication origin selector which selects the origins to be fired and catalyzes the multi-mono-ubiquitination of a subset of chromatin-bound ORC3 and ORC5 during S-phase. The protein is ORC ubiquitin ligase 1 of Mus musculus (Mouse).